We begin with the raw amino-acid sequence, 585 residues long: Amyloid protein-binding protein 2 (585 aa).

8 TPR repeats span residues 50–83, 120–153, 206–239, 288–321, 333–367, 429–462, 471–505, and 514–547; these read QGRL…HHCF, IQVG…CTLH, AALY…ITSG, SDTL…RQSV, HEDL…ITHI, AKHY…KEQL, ALSV…GKKL, and EYDY…NRLR.

As to quaternary structure, component of a CRL2 E3 ubiquitin-protein ligase complex, also named ECS (Elongin BC-CUL2/5-SOCS-box protein) complex, composed of CUL2, Elongin BC (ELOB and ELOC), RBX1 and substrate-specific adapter APPBP2. Interacts with APP; APP interaction inhibits the E3 ubiquitin-protein ligase activity of the CRL2(APPBP2) complex. Rapidly degraded by the proteasome upon overexpression of a C-terminal fragment of APP.

The protein localises to the nucleus. It is found in the cytoplasm. Its subcellular location is the cytoskeleton. The protein resides in the membrane. It participates in protein modification; protein ubiquitination. E3 ubiquitin-protein ligase activity of the CRL2(APPBP2) complex is inhibited by APP. Functionally, substrate-recognition component of a Cul2-RING (CRL2) E3 ubiquitin-protein ligase complex of the DesCEND (destruction via C-end degrons) pathway, which recognizes a C-degron located at the extreme C terminus of target proteins, leading to their ubiquitination and degradation. The C-degron recognized by the DesCEND pathway is usually a motif of less than ten residues and can be present in full-length proteins, truncated proteins or proteolytically cleaved forms. The CRL2(APPBP2) complex specifically recognizes proteins with a -Arg-Xaa-Xaa-Gly degron at the C-terminus, leading to their ubiquitination and degradation. The CRL2(APPBP2) complex mediates ubiquitination and degradation of truncated SELENOV selenoproteins produced by failed UGA/Sec decoding, which end with a -Arg-Xaa-Xaa-Gly degron. May play a role in intracellular protein transport: may be involved in the translocation of APP along microtubules toward the cell surface. The sequence is that of Amyloid protein-binding protein 2 from Rattus norvegicus (Rat).